A 541-amino-acid polypeptide reads, in one-letter code: Solute carrier family 22 member 10 (541 aa).

The Cytoplasmic portion of the chain corresponds to 1–15 (MAFEELLSQVGGLGR). Residues 16–36 (FQMLHLVFILPSLMLLIPHIL) traverse the membrane as a helical segment. At 37–145 (LENFAAAIPG…DLVCDYQSLK (109 aa)) the chain is on the extracellular side. N-linked (GlcNAc...) asparagine glycans are attached at residues Asn-56 and Asn-102. The helical transmembrane segment at 146–166 (SVVQFLLLTGMLVGGIIGGHV) threads the bilayer. At 167–193 (SDRFGRRFILRWCLLQLAITDTCAAFA) the chain is on the cytoplasmic side. Residues 194 to 214 (PTFPVYCVLRFLAGFSSMIII) form a helical membrane-spanning segment. Topologically, residues 215–230 (SNNSLPITEWIRPNSK) are extracellular. A helical membrane pass occupies residues 231–251 (ALVVILSSGALSIGQIILGGL). Residues 252 to 259 (AYVFRDWQ) are Cytoplasmic-facing. Residues 260 to 280 (TLHVVASVPFFVFFLLSRWLV) traverse the membrane as a helical segment. The Extracellular portion of the chain corresponds to 281–349 (ESARWLIITN…LFRNPSMRKR (69 aa)). The chain crosses the membrane as a helical span at residues 350–370 (ICILVFLRFANTIPFYGTMVN). At 371–377 (LQHVGSN) the chain is on the cytoplasmic side. A helical membrane pass occupies residues 378–398 (IFLLQVLYGAVALIVRCLALL). Residues 399–406 (TLNHMGRR) are Extracellular-facing. The helical transmembrane segment at 407–427 (ISQILFMFLVGLSILANTFVP) threads the bilayer. Residues 428–436 (KEMQTLRVA) lie on the Cytoplasmic side of the membrane. The helical transmembrane segment at 437–457 (LACLGIGCSAATFSSVAVHFI) threads the bilayer. The Extracellular portion of the chain corresponds to 458-472 (ELIPTVLRARASGID). A helical membrane pass occupies residues 473–493 (LTASRIGAALAPLLMTLTVFF). At 494-495 (TT) the chain is on the cytoplasmic side. Residues 496–516 (LPWIIYGIFPIIGGLIVFLLP) form a helical membrane-spanning segment. Residues 517–541 (ETKNLPLPDTIKDVENQKKNLKEKA) lie on the Extracellular side of the membrane.

The protein belongs to the major facilitator (TC 2.A.1) superfamily. Organic cation transporter (TC 2.A.1.19) family. As to expression, detected in fetal and adult liver, and in adult kidney.

The protein resides in the membrane. This is Solute carrier family 22 member 10 (SLC22A10) from Homo sapiens (Human).